Reading from the N-terminus, the 311-residue chain is Malate dehydrogenase (311 aa).

NAD(+) contacts are provided by residues 7–13 and Asp-34; that span reads GAAGGIG. 2 residues coordinate substrate: Arg-81 and Arg-87. NAD(+) is bound by residues Asn-94 and 117 to 119; that span reads ITN. Positions 119 and 153 each coordinate substrate. The Proton acceptor role is filled by His-177. Residue Met-227 participates in NAD(+) binding.

The protein belongs to the LDH/MDH superfamily. MDH type 1 family. In terms of assembly, homodimer.

It carries out the reaction (S)-malate + NAD(+) = oxaloacetate + NADH + H(+). Catalyzes the reversible oxidation of malate to oxaloacetate. The polypeptide is Malate dehydrogenase (Erwinia tasmaniensis (strain DSM 17950 / CFBP 7177 / CIP 109463 / NCPPB 4357 / Et1/99)).